Here is a 145-residue protein sequence, read N- to C-terminus: Large ribosomal subunit protein uL15 (145 aa).

Positions 1-52 (MKLNTIAPAEGSKKDRRRVGRGIGSGFGKTAGRGHKGQHARSGGYHKVGFEG) are disordered. Over residues 21-31 (RGIGSGFGKTA) the composition is skewed to gly residues.

The protein belongs to the universal ribosomal protein uL15 family. Part of the 50S ribosomal subunit.

Functionally, binds to the 23S rRNA. The chain is Large ribosomal subunit protein uL15 from Acidithiobacillus ferrooxidans (strain ATCC 53993 / BNL-5-31) (Leptospirillum ferrooxidans (ATCC 53993)).